We begin with the raw amino-acid sequence, 818 residues long: LisH domain-containing protein ARMC9 (818 aa).

A LisH domain is found at His-7–Gly-39. The stretch at Gln-204–Arg-230 forms a coiled coil. Phosphoserine is present on Ser-582. Disordered regions lie at residues Val-642 to Glu-755 and Ser-790 to Lys-818. A compositionally biased stretch (low complexity) spans Ser-701–Ser-711. The span at Cys-792 to Lys-818 shows a compositional bias: polar residues.

Interacts with TOGARAM1, CCDC66, CEP104, CSPP1 and CEP290. Interacts with NDUFAF2. Strongly expressed in most melanomas and melanocytes. Weakly expressed in the testis.

It is found in the cytoplasm. The protein resides in the cytoskeleton. Its subcellular location is the cilium basal body. It localises to the cell projection. The protein localises to the cilium. It is found in the microtubule organizing center. The protein resides in the centrosome. Its subcellular location is the centriole. Involved in ciliogenesis. It is required for appropriate acetylation and polyglutamylation of ciliary microtubules, and regulation of cilium length. Acts as a positive regulator of hedgehog (Hh)signaling. May participate in the trafficking and/or retention of GLI2 and GLI3 proteins at the ciliary tip. The chain is LisH domain-containing protein ARMC9 from Homo sapiens (Human).